The sequence spans 445 residues: Methionine aminopeptidase 2-1 (445 aa).

Residues 1-86 (MAAQASEDLQ…VQSEPPRVPL (86 aa)) are disordered. Over residues 34-46 (GEAEDDSDDDADE) the composition is skewed to acidic residues. Over residues 59–74 (AKKKKKRKSKKKKKGG) the composition is skewed to basic residues. H198 contacts substrate. D218, D229, and H298 together coordinate a divalent metal cation. Substrate is bound at residue H306. A divalent metal cation is bound by residues E331 and E426.

This sequence belongs to the peptidase M24A family. Methionine aminopeptidase eukaryotic type 2 subfamily. Requires Co(2+) as cofactor. It depends on Zn(2+) as a cofactor. The cofactor is Mn(2+). Fe(2+) serves as cofactor.

It localises to the cytoplasm. The catalysed reaction is Release of N-terminal amino acids, preferentially methionine, from peptides and arylamides.. Cotranslationally removes the N-terminal methionine from nascent proteins. The N-terminal methionine is often cleaved when the second residue in the primary sequence is small and uncharged (Met-Ala-, Cys, Gly, Pro, Ser, Thr, or Val). This is Methionine aminopeptidase 2-1 from Aspergillus flavus (strain ATCC 200026 / FGSC A1120 / IAM 13836 / NRRL 3357 / JCM 12722 / SRRC 167).